The sequence spans 234 residues: Probable RNA/DNA demethylase ALKBH6 (234 aa).

The 127-residue stretch at 96–222 (TANHVLVNEY…RVSLTIRHVP (127 aa)) folds into the Fe2OG dioxygenase domain. Residues asparagine 103 and tyrosine 105 each contribute to the 2-oxoglutarate site. Positions 114, 116, and 180 each coordinate Fe cation. Positions 213 and 215 each coordinate 2-oxoglutarate.

It belongs to the alkB family. Requires Fe(2+) as cofactor.

It localises to the cytoplasm. The protein localises to the nucleus. Functionally, probable Fe(2+)/2-oxoglutarate-dependent dioxygenase involved in oxidative demethylation of nucleic acids. Binds nucleic acids with a preference for ssDNA or ssRNA to other types of DNAs. May play a role in nucleic acid damage repair. This is Probable RNA/DNA demethylase ALKBH6 (alkbh6) from Danio rerio (Zebrafish).